A 902-amino-acid polypeptide reads, in one-letter code: MDGTMGLQGLLCLCLASHLALQAMPTQGSPTDSTKGNKAVNGVVIRSLKVNCKVTSRFAHYVVTSQVVNNTNKPKEVAFDVEIPKTAFISDFAITADENTFVGDIKDKVTAWKQYRKAAISGENSGLVRASGRTMEQFTIHVTIGPRSKATFQLTYEEVLRRKLTQYDIVIKVKPKQLVQHFEIDVDIFEPQGISKLDAQASFLSKEAAAQLIKKSFSGKKGHVLFRPTVGQQQSCSTCSTTLLNGDFKVTYDVNREKLCDLLVANNYFAHFFAPQNLTKLNKNVVFVIDISSSMEGQKVKQTKEALLKILSDLKPGDYFDLVLFGSAVQSWRGSLVQASTANLDAARSYVRQFSLAGSTNLNGGLLRGIEILNKAQGSLPEFSNRASILIMLTDGEPTEGVTDRSQILKNVRDAIRGRFPLYNLGFGHDVEWNFLEVRALENNGRAQRIYEDHDSAQQLQGFYDQVANPLLKDVELQYPADAVLALTQHRHKQYYEGSEITVAGRIADNKLSSFKADVQASGDQGFKTTCLVDEEEMKKLLQERGHMLENYVERLWAYLTIQELLAKRMKLEWAEKASVSAKALQMSLDYQFVTPLTSMTIRGMADKDGLEPVIDKPLEDSQPLEMLGPRRKFVLSASQPSPTHPSSSIQKLPDRVTGVDTDPHFIIRVPQKEDTLCFNINEEPGVVLSLVQDPDTGFSVNGQLIGNEARCPGKHEGTYFGRLGIANPATGFQLEVTPQNITLNPGSGGPVFSWRDQASLRQDEVVVTINRKRNLGVVREDGGTFEVVLHRLWKGSAIHQDFLGFYVLDSHRMSARTHGLLAQFFHPFDYKVSDIHPGSDPTKTDATMVVKNRQLTVTRGLQKDYSKDPRHGLKVTCWFIHNNGDGLIDGVHTDYIVPDIF.

The first 28 residues, 1-28 (MDGTMGLQGLLCLCLASHLALQAMPTQG), serve as a signal peptide directing secretion. Residues 29-158 (SPTDSTKGNK…KATFQLTYEE (130 aa)) enclose the VIT domain. Residue cysteine 52 is glycosylated (S-linked (Hex...) cysteine). Residue asparagine 69 is glycosylated (N-linked (GlcNAc...) asparagine). Serine 121 bears the Phosphoserine mark. Asparagine 277 is a glycosylation site (N-linked (GlcNAc...) asparagine). In terms of domain architecture, VWFA spans 282 to 442 (NKNVVFVIDI…WNFLEVRALE (161 aa)). 2 positions are modified to phosphothreonine: threonine 394 and threonine 399. The segment covering 637-651 (SASQPSPTHPSSSIQ) has biased composition (polar residues). The tract at residues 637–656 (SASQPSPTHPSSSIQKLPDR) is disordered. Serine 639 is a glycosylation site (O-linked (GalNAc...) serine). The O-linked (GalNAc...) threonine glycan is linked to threonine 644. Aspartate 663 carries the post-translational modification Aspartate 1-(chondroitin 4-sulfate)-ester. A propeptide spanning residues 664–902 (PHFIIRVPQK…HTDYIVPDIF (239 aa)) is cleaved from the precursor. Asparagine 741 carries N-linked (GlcNAc...) asparagine glycosylation.

Belongs to the ITIH family. I-alpha-I plasma protease inhibitors are assembled from one or two heavy chains (HC) and one light chain, bikunin. Inter-alpha-inhibitor (I-alpha-I) is composed of ITIH1/HC1, ITIH2/HC2 and bikunin. Interacts with TNFAIP6 (via Link and CUB domains). In terms of processing, heavy chains are linked to bikunin via chondroitin 4-sulfate esterified to the alpha-carboxyl of the C-terminal aspartate after propeptide cleavage. The S-linked glycan is composed of two 6-carbon sugars, possibly Glc or Gal.

It is found in the secreted. Its function is as follows. May act as a carrier of hyaluronan in serum or as a binding protein between hyaluronan and other matrix protein, including those on cell surfaces in tissues to regulate the localization, synthesis and degradation of hyaluronan which are essential to cells undergoing biological processes. The protein is Inter-alpha-trypsin inhibitor heavy chain H1 (ITIH1) of Sus scrofa (Pig).